We begin with the raw amino-acid sequence, 339 residues long: 2-halobenzoate 1,2-dioxygenase electron transfer component (339 aa).

The 2Fe-2S ferredoxin-type domain occupies 3–96 (HSIALRFEDD…DCVVRILASS (94 aa)). Residues Cys40, Cys45, Cys48, and Cys80 each contribute to the [2Fe-2S] cluster site. A ferredoxin-reductase region spans residues 98–336 (ACQVKKSTMT…NFYFEKFAPT (239 aa)). The FAD-binding FR-type domain maps to 103-203 (KSTMTGQMTE…DGPYGAFYLR (101 aa)).

The protein belongs to the bacterial ring-hydroxylating dioxygenase ferredoxin reductase family. In terms of assembly, monomer. It is part of 2-halobenzoate dioxygenase two component enzyme system. The other component is a dioxygenase component consisting of 3 large (CbdA) subunits and 3 small (CbdB) subunits. It depends on FAD as a cofactor. Requires [2Fe-2S] cluster as cofactor.

The catalysed reaction is 2 reduced [2Fe-2S]-[ferredoxin] + NAD(+) + H(+) = 2 oxidized [2Fe-2S]-[ferredoxin] + NADH. Its pathway is xenobiotic degradation; benzoate degradation via CoA ligation. Its function is as follows. Electron transfer component of 2-halobenzoate 1,2-dioxygenase system. This is 2-halobenzoate 1,2-dioxygenase electron transfer component (cbdC) from Burkholderia cepacia (Pseudomonas cepacia).